Consider the following 278-residue polypeptide: MRVALGVSYNGSAYRGWQSQPGGATVQDRLEAALARFATHEVSTICAGRTDAGVHGLMQVVHFDTPLERTPFSWVRGTNTFLPPDIAVQWARPVPEAFHSRASATARRYAYVLLQSPVRPSVEAGRVGWVFHALDGDAMRAAARHLLGEHDFTSFRASACQAKSPVKTLRRIEITQRGTGGVPAGQAPGDRGDVPTCYWRFEFEGNAFLHHMVRNIMGCLVAVGQGQHPADWMHAVLQARSRDAAAPTFSPDGLYFLGPLYDPAWGLPDRTAAYDWLP.

Asp-51 (nucleophile) is an active-site residue. Residue Tyr-109 participates in substrate binding.

The protein belongs to the tRNA pseudouridine synthase TruA family. Homodimer.

It carries out the reaction uridine(38/39/40) in tRNA = pseudouridine(38/39/40) in tRNA. Its function is as follows. Formation of pseudouridine at positions 38, 39 and 40 in the anticodon stem and loop of transfer RNAs. The protein is tRNA pseudouridine synthase A of Paracidovorax citrulli (strain AAC00-1) (Acidovorax citrulli).